Consider the following 119-residue polypeptide: Large ribosomal subunit protein bL20 (119 aa).

Belongs to the bacterial ribosomal protein bL20 family.

In terms of biological role, binds directly to 23S ribosomal RNA and is necessary for the in vitro assembly process of the 50S ribosomal subunit. It is not involved in the protein synthesizing functions of that subunit. In Acidovorax sp. (strain JS42), this protein is Large ribosomal subunit protein bL20.